Here is a 150-residue protein sequence, read N- to C-terminus: Transcriptional repressor NrdR (150 aa).

The segment at Cys-3–Cys-34 is a zinc-finger region. Residues Leu-49–Ser-139 enclose the ATP-cone domain.

This sequence belongs to the NrdR family. The cofactor is Zn(2+).

In terms of biological role, negatively regulates transcription of bacterial ribonucleotide reductase nrd genes and operons by binding to NrdR-boxes. This Finegoldia magna (strain ATCC 29328 / DSM 20472 / WAL 2508) (Peptostreptococcus magnus) protein is Transcriptional repressor NrdR.